A 102-amino-acid polypeptide reads, in one-letter code: Iron-sulfur cluster assembly protein CyaY (102 aa).

This sequence belongs to the frataxin family.

Involved in iron-sulfur (Fe-S) cluster assembly. May act as a regulator of Fe-S biogenesis. The sequence is that of Iron-sulfur cluster assembly protein CyaY from Actinobacillus succinogenes (strain ATCC 55618 / DSM 22257 / CCUG 43843 / 130Z).